We begin with the raw amino-acid sequence, 387 residues long: [LysW]-aminoadipate semialdehyde/glutamate semialdehyde transaminase (387 aa).

Residues 96-97 and Phe-123 each bind pyridoxal 5'-phosphate; that span reads GT. Arg-126 lines the substrate pocket. Pyridoxal 5'-phosphate is bound at residue 207-210; that stretch reads DEIQ. N6-(pyridoxal phosphate)lysine is present on Lys-236. Position 264 (Ser-264) interacts with substrate. A pyridoxal 5'-phosphate-binding site is contributed by Thr-265.

The protein belongs to the class-III pyridoxal-phosphate-dependent aminotransferase family. LysJ subfamily. As to quaternary structure, homodimer. Pyridoxal 5'-phosphate is required as a cofactor.

It is found in the cytoplasm. It catalyses the reaction [amino-group carrier protein]-C-terminal-gamma-(L-lysyl)-L-glutamate + 2-oxoglutarate = [amino-group carrier protein]-C-terminal-N-(1-carboxy-5-oxopentan-1-yl)-L-glutamine + L-glutamate. The catalysed reaction is [amino-group carrier protein]-C-terminal-gamma-(L-ornithyl)-L-glutamate + 2-oxoglutarate = [amino-group carrier protein]-C-terminal-gamma-(L-glutamyl-5-semialdehyde)-L-glutamate + L-glutamate. It participates in amino-acid biosynthesis; L-lysine biosynthesis via AAA pathway; L-lysine from L-alpha-aminoadipate (Thermus route): step 4/5. The protein operates within amino-acid biosynthesis; L-arginine biosynthesis. Functionally, involved in both the arginine and lysine biosynthetic pathways. This chain is [LysW]-aminoadipate semialdehyde/glutamate semialdehyde transaminase, found in Sulfolobus acidocaldarius (strain ATCC 33909 / DSM 639 / JCM 8929 / NBRC 15157 / NCIMB 11770).